A 72-amino-acid chain; its full sequence is Late effector protein 1 (72 aa).

An N-terminal signal peptide occupies residues 1-22; the sequence is MKCYLVVVVAALCTLVAQGSVG. Residue N66 is glycosylated (N-linked (GlcNAc...) asparagine).

This sequence belongs to the lep1 family. As to quaternary structure, interacts at the cell wall with secreted rep1 repellent peptides.

The protein resides in the secreted. Its subcellular location is the cell wall. In terms of biological role, core effector contributing to spore formation and tumor formation at the host plant. Modulates surface hydrophobicity promoting cell-cell or cell-surface contacts. Lep1 and rep1 interact in aerial hyphae to form a strong hydrophobic layer. Plays a crucial role in hyphal aggregation that might be a prerequisite for strong proliferation of diploid cells and for induction of the morphological changes associated with spore formation. This is Late effector protein 1 from Sporisorium reilianum (strain SRZ2) (Maize head smut fungus).